Reading from the N-terminus, the 642-residue chain is MIPNGYLMFEDENFIESSVAKLNALRKSGQFCDVRLQVCGHEMLAHRAVLACCSPYLFEIFNSDSDPHGVSHVKLDDLNPEAVEVLLNYAYTAQLKADKELVKDVYSAAKKLKMDRVKQVCGDYLLSRMDVTSCISYRNFASCMGDSRLLNKVDAYIQEHLLQISEEEEFLKLPRLKLEVMLEDNVCLPSNGKLYTKVINWVQRSIWENGDSLEELMEEVQTLYYSADHKLLDGNPLDGQAEVFGSDDDHIQFVQKKPPRENGHKQISGSSTGCLSSPNASMQSPKHEWKIVASEKTSNNTYLCLAVLDSTFCVIFLHGRNSPQSSPTSTPKLSKSLSFEMQPDELLEKPMSPMQYARSGLGTAEMNGKLIAAGGYNREECLRTVECYDPHTDHWSFLAPMRTPRARFQMAVLMGQLYVVGGSNGHSDDLSCGEMYDPNIDDWTPVPELRTNRCNAGVCALNGKLYIVGGSDPYGQKGLKNCDVFDPVTKSWTSCAPLNIRRHQSAVCELGGYLYIIGGAESWNCLNTVERYNPENNTWTLIAPMNVARRGAGVAVLDGKLFVGGGFDGSHAISCVEMYDPTRNEWKMMGNMTSPRSNAGITTVGNTIYAVGGFDGNEFLNTVEVYNPQSNEWSPYTKIFQF.

The region spanning 32-99 (CDVRLQVCGH…AYTAQLKADK (68 aa)) is the BTB domain. A BACK domain is found at 134–233 (CISYRNFASC…YYSADHKLLD (100 aa)). Phosphoserine is present on residues S246, S277, S322, S336, and S338. A disordered region spans residues 257-281 (KPPRENGHKQISGSSTGCLSSPNAS). Over residues 265-281 (KQISGSSTGCLSSPNAS) the composition is skewed to polar residues. Kelch repeat units lie at residues 369–415 (KLIA…VLMG), 416–463 (QLYV…ALNG), 465–512 (LYIV…ELGG), 513–559 (YLYI…VLDG), 561–606 (LFVG…TVGN), and 608–642 (IYAV…IFQF).

The protein belongs to the BTB-kelch protein family. As to quaternary structure, homodimer; through the BTB domain. Interacts with AHR/Aryl hydrocarbon receptor. Interacts (via BACK domain) with pre-mRNA-binding protein HNRNPK; the interaction is direct. Interacts (via BACK domain) with splicing factor PTBP1; the interaction is direct. Interacts (via Kelch repeats) with RNA polymerase POLR2A (via C-terminal domain). Interacts (via BACK domain) with splicing factor SNRPA; the interaction is indirect. Interacts (via Kelch repeats) with splicing factor SART1. Interacts (via BACK domain) with ALYREF; the interaction is indirect and likely plays a role in mRNA nuclear export. Interacts (via Kelch repeats) with KLHL20 (via Kelch repeats); this interaction blocks the assembly of Cul3-KLHL20 complex. Ubiquitous expression. In the heart, the highest expression is detected in the ventricles and the lowest in the atria. Expressed in dendrites and spines in neurons.

It localises to the cytoplasm. Its subcellular location is the cytoskeleton. The protein localises to the nucleus. Functionally, involved in many cell functions, including pre-mRNA splicing, the aryl hydrocarbon receptor (AHR) pathway, F-actin organization and protein ubiquitination. Plays a role in the dynamic organization of the actin skeleton as a stabilizer of actin filaments by association with F-actin through Kelch repeats. Protects cells from cell death induced by actin destabilization. Functions as a modifier of the AHR/Aryl hydrocarbon receptor pathway increasing the concentration of AHR available to activate transcription. In addition, functions as a negative regulator of BCR(KLHL20) E3 ubiquitin ligase complex to prevent ubiquitin-mediated proteolysis of PML and DAPK1, two tumor suppressors. Inhibits pre-mRNA splicing (in vitro). May play a role in mRNA nuclear export. May play a role in cell cycle progression in the nucleus. The protein is Influenza virus NS1A-binding protein homolog of Mus musculus (Mouse).